We begin with the raw amino-acid sequence, 465 residues long: MSSELMFNYTFSWPAGPKDVILTGTFDDWRGTLPLVKTAKGNFEITMPVKLANKDDTFQFKFIVDGVWCVSDSYKKEHVSEGIENNFLQITDLVETQEVAGASRIPEAGGLLCGKPPRSAGPPSTSNRKKNKRNNKKRRSKLKKKSTKNNKKSNESLDDNEEEDGVTGTTTEDVTGTSREETPLAEPTNVSKEAPGNFHILPIDQSADTTQSNGIIGGPGPVLVPNPGEIKEFTEIRDVDARELNERLNKKEEVPEPVAGPIVESSVTEKSPALPQADDPIVETKEVAHNVQELTPQVEAVTPLINEPEPLPTPEAQISIPESTKVEPVEGSLQSKLVEKRESTEGVLDGSKKVENKAKKDEEVFTLDPIVNKAPKLPLTDEQTAEGRKSPAVSEEKEKKKKQEKGSKEVKRSETSKEKKPSAKEVKKQTVKASKKQTASPLSSSTEEPKKKKTGFFGKLKKLFK.

Disordered stretches follow at residues 107 to 227 (EAGG…VPNP) and 247 to 276 (RLNKKEEVPEPVAGPIVESSVTEKSPALPQ). Over residues 127–151 (NRKKNKRNNKKRRSKLKKKSTKNNK) the composition is skewed to basic residues. Residues serine 153 and serine 156 each carry the phosphoserine modification. The span at 156 to 165 (SLDDNEEEDG) shows a compositional bias: acidic residues. The segment at 160 to 161 (NE) is X-DNA-binding. The segment covering 166 to 177 (VTGTTTEDVTGT) has biased composition (low complexity). Threonine 182 is modified (phosphothreonine). Serine 271 carries the phosphoserine modification. A Phosphothreonine modification is found at threonine 295. The disordered stretch occupies residues 298-465 (VEAVTPLINE…FFGKLKKLFK (168 aa)). Serine 319 and serine 343 each carry phosphoserine. Basic and acidic residues predominate over residues 337-363 (LVEKRESTEGVLDGSKKVENKAKKDEE). Position 366 is a phosphothreonine (threonine 366). Composition is skewed to basic and acidic residues over residues 385 to 398 (AEGRKSPAVSEEKE) and 404 to 428 (EKGSKEVKRSETSKEKKPSAKEVKK). The residue at position 394 (serine 394) is a Phosphoserine. Serine 440 carries the post-translational modification Phosphoserine. A compositionally biased stretch (basic residues) spans 451 to 465 (KKKTGFFGKLKKLFK).

This sequence belongs to the CRP1/MDG1 family. Post-translationally, cleaved in the vicinity of position 160 to give an X-DNA-binding N-terminal subpeptide and a non-DNA-binding C-terminal subpeptide.

Functionally, cruciform DNA-binding protein which exerts an enhancing effect on the cleavage of cruciform DNA (X-DNA) by endonuclease VII from bacteriophage T4. The protein is Cruciform DNA-recognizing protein 1 (CRP1) of Saccharomyces cerevisiae (strain AWRI796) (Baker's yeast).